The following is a 168-amino-acid chain: Mitochondrial inner membrane protein SHH4 (168 aa).

Residues 1-23 constitute a mitochondrion transit peptide; sequence MSSTKFLKPLCRIRAFHTSIARS. Over 24–65 the chain is Mitochondrial matrix; that stretch reads FTIPFLPKIPQKPGGVSGTANDSSYMPPESRAQGSYHWIVER. A helical transmembrane segment spans residues 66–86; it reads GLSLAVLPLIAVPLVTTGPIS. The Mitochondrial intermembrane segment spans residues 87-92; that stretch reads TFTDTF. The helical transmembrane segment at 93–113 threads the bilayer; the sequence is LSLVLLGHCHIGFQSCIIDYI. C101 provides a ligand contact to heme. Residue Y112 coordinates a ubiquinone. Residues 114–120 lie on the Mitochondrial matrix side of the membrane; that stretch reads SERVYGK. A helical membrane pass occupies residues 121–141; that stretch reads VHHYAMYLLSLGSFLSFVGIY. The Mitochondrial intermembrane segment spans residues 142 to 168; that stretch reads KLESQEAGLIASLKSLWDNKPVEKKRQ.

Belongs to the CybS family. In terms of assembly, interacts with SDH3.

It localises to the mitochondrion inner membrane. Its function is as follows. Homolog of SDH4, but seems not to be a stoichiometric subunit of either the succinate dehydrogenase (SDH) complex or the mitochondrial inner membrane translocase TIM22 complex. The chain is Mitochondrial inner membrane protein SHH4 from Saccharomyces cerevisiae (strain ATCC 204508 / S288c) (Baker's yeast).